We begin with the raw amino-acid sequence, 220 residues long: Translation initiation factor 6 (220 aa).

Belongs to the eIF-6 family.

Its function is as follows. Binds to the 50S ribosomal subunit and prevents its association with the 30S ribosomal subunit to form the 70S initiation complex. The sequence is that of Translation initiation factor 6 from Pyrobaculum arsenaticum (strain DSM 13514 / JCM 11321 / PZ6).